We begin with the raw amino-acid sequence, 411 residues long: Meiotic driver wtf33 (411 aa).

The interval 1–95 (MKNKYYPLRS…ENHSSGTADN (95 aa)) is disordered. The segment covering 11–29 (SMDELSTKNDNEIDLEKGP) has biased composition (basic and acidic residues). The segment covering 57-72 (GANNPNLFNTDESTTP) has biased composition (polar residues). 6 helical membrane-spanning segments follow: residues 104–124 (AILS…YLTY), 137–157 (WVYF…LWCF), 244–264 (EMMI…FGCV), 281–301 (TISA…WTLW), 303–323 (ALSG…LVNG), and 336–356 (GYEI…LYEM).

This sequence belongs to the WTF family. As to quaternary structure, homomer. Forms protein aggregates. The two isoforms can interact with each other and with themselves. High sequence similarity is required for their interaction.

The protein resides in the spore membrane. It localises to the vacuole membrane. It is found in the ascus epiplasm. The protein localises to the cytoplasm. Its subcellular location is the endoplasmic reticulum membrane. Functionally, promotes unequal transmission of alleles from the parental zygote to progeny spores by acting as poison/antidote system where the poison and antidote proteins are produced from the same locus; the poison component is trans-acting and targets all spores within an ascus whereas the antidote component is spore-specific, leading to poisoning of all progeny that do not inherit the allele. In terms of biological role, localizes isoform 2 to the vacuole thereby facilitating its degradation. Forms toxic aggregates that disrupt spore maturation. This chain is Meiotic driver wtf33, found in Schizosaccharomyces kambucha (Fission yeast).